The following is a 463-amino-acid chain: Calcitonin gene-related peptide type 1 receptor (463 aa).

Residues 1-22 form the signal peptide; it reads MDKKHILCFLVLLPLNMALISA. The Extracellular segment spans residues 23 to 138; it reads ESEEGVNQTD…STHEKVKTAL (116 aa). Asn-29, Asn-65, Asn-117, Asn-122, Asn-127, and Asn-128 each carry an N-linked (GlcNAc...) asparagine glycan. 3 disulfide bridges follow: Cys-47-Cys-73, Cys-64-Cys-104, and Cys-87-Cys-126. Residues 139–163 form a helical membrane-spanning segment; the sequence is NLFYLTIIGHGLSIASLIISLIIFF. The Cytoplasmic segment spans residues 164 to 174; the sequence is YFKSLSCQRIT. A helical membrane pass occupies residues 175–197; sequence LHKNLFFSFICNSIVTIIHLTAV. Over 198-208 the chain is Extracellular; that stretch reads ANNQALVATNP. Residues 209-237 traverse the membrane as a helical segment; it reads VSCKVSQFIHLYLMGCNYFWMLCEGVYLH. The Cytoplasmic segment spans residues 238–251; that stretch reads TLIVVAVFAEKQHL. Residues 252-272 form a helical membrane-spanning segment; that stretch reads MWYYFLGWGFPLLPACIHAIA. Residues 273–288 lie on the Extracellular side of the membrane; sequence RSLYYNDNCWISSDTH. The segment at 287 to 288 is required for RAMP3 interaction; the sequence is TH. Residues 289-313 traverse the membrane as a helical segment; sequence LLYIIHGPICAALLVNLFFLLNIVR. Topologically, residues 314–328 are cytoplasmic; that stretch reads VLITKLKVTHQVESN. Residues 329–350 form a helical membrane-spanning segment; that stretch reads LYMKAVRATLILVPLLGIEFVL. Topologically, residues 351 to 365 are extracellular; that stretch reads FPWRPEGKVAEEVYD. Residues 366 to 386 traverse the membrane as a helical segment; it reads YVMHILMHFQGLLVATIFCFF. The Cytoplasmic portion of the chain corresponds to 387–463; that stretch reads NGEVQAILRR…KSENMYDLVM (77 aa). Residues Ser-419 and Ser-444 each carry the phosphoserine modification.

This sequence belongs to the G-protein coupled receptor 2 family. In terms of assembly, heterodimer of CALCRL and RAMP1; the receptor complex functions as CGRP receptor. Heterodimer of CALCRL and RAMP2 or CALCRL and RAMP3; the complexes function as adrenomedullin receptor. As to expression, expressed predominantly in the lung, thymus, heart and brain.

It is found in the cell membrane. Functionally, g protein-coupled receptor which specificity is determined by its interaction with receptor-activity-modifying proteins (RAMPs). Together with RAMP1, form the receptor complex for calcitonin-gene-related peptides CALCA/CGRP1 and CALCB/CGRP2. Together with RAMP2 or RAMP3, function as receptor complexes for adrenomedullin (ADM and ADM2). Ligand binding causes a conformation change that triggers signaling via guanine nucleotide-binding proteins (G proteins) and modulates the activity of downstream effectors. Activates cAMP-dependent pathway. The polypeptide is Calcitonin gene-related peptide type 1 receptor (Mus musculus (Mouse)).